The primary structure comprises 953 residues: Translation initiation factor IF-2 (953 aa).

2 disordered regions span residues 48-240 (SSFS…AQQE) and 279-363 (TKLK…TERK). Composition is skewed to basic and acidic residues over residues 80 to 89 (TGSEHVEKTQ), 98 to 111 (FKAEREARAKEQAA), and 140 to 188 (QGDK…ENHK). Positions 191–207 (RFTNQKKQGRQEPQSKS) are enriched in polar residues. A compositionally biased stretch (basic and acidic residues) spans 229-240 (RQSETRFRAQQE). Residues 282–291 (KSSNISAKST) are compositionally biased toward polar residues. A compositionally biased stretch (basic and acidic residues) spans 300–317 (ARPEKNRELTHHSQEGQK). Over residues 322–338 (SWNSQNQVRNQKNSNWN) the composition is skewed to low complexity. A compositionally biased stretch (basic residues) spans 339–348 (KNKKTKKGKN). Positions 454–623 (ERAPVVTIMG…LLVAEVEELK (170 aa)) constitute a tr-type G domain. The G1 stretch occupies residues 463-470 (GHVDHGKT). 463-470 (GHVDHGKT) provides a ligand contact to GTP. The G2 stretch occupies residues 488 to 492 (GITQH). The interval 509–512 (DTPG) is G3. GTP-binding positions include 509-513 (DTPGH) and 563-566 (NKID). The segment at 563–566 (NKID) is G4. Positions 599–601 (SAK) are G5.

The protein belongs to the TRAFAC class translation factor GTPase superfamily. Classic translation factor GTPase family. IF-2 subfamily.

It is found in the cytoplasm. Functionally, one of the essential components for the initiation of protein synthesis. Protects formylmethionyl-tRNA from spontaneous hydrolysis and promotes its binding to the 30S ribosomal subunits. Also involved in the hydrolysis of GTP during the formation of the 70S ribosomal complex. In Streptococcus pyogenes serotype M1, this protein is Translation initiation factor IF-2.